The primary structure comprises 449 residues: Bifunctional protein GlmU (449 aa).

The tract at residues 1–225 (MLSVAILAAG…NGELQGINNR (225 aa)) is pyrophosphorylase. UDP-N-acetyl-alpha-D-glucosamine is bound by residues 7 to 10 (LAAG), lysine 21, glutamine 73, and 78 to 79 (GT). Mg(2+) is bound at residue aspartate 103. Glycine 140, glutamate 154, asparagine 169, and asparagine 223 together coordinate UDP-N-acetyl-alpha-D-glucosamine. Residue asparagine 223 participates in Mg(2+) binding. Positions 226–246 (IHLSECEECIQNSIKEKHMLN) are linker. The tract at residues 247 to 449 (GVTFINKASC…NIENWKKKKS (203 aa)) is N-acetyltransferase. Residues arginine 328 and lysine 346 each coordinate UDP-N-acetyl-alpha-D-glucosamine. The active-site Proton acceptor is the histidine 358. UDP-N-acetyl-alpha-D-glucosamine is bound by residues tyrosine 361 and asparagine 372. Alanine 375, alanine 418, and arginine 435 together coordinate acetyl-CoA.

In the N-terminal section; belongs to the N-acetylglucosamine-1-phosphate uridyltransferase family. It in the C-terminal section; belongs to the transferase hexapeptide repeat family. As to quaternary structure, homotrimer. It depends on Mg(2+) as a cofactor.

The protein localises to the cytoplasm. The catalysed reaction is alpha-D-glucosamine 1-phosphate + acetyl-CoA = N-acetyl-alpha-D-glucosamine 1-phosphate + CoA + H(+). It catalyses the reaction N-acetyl-alpha-D-glucosamine 1-phosphate + UTP + H(+) = UDP-N-acetyl-alpha-D-glucosamine + diphosphate. Its pathway is nucleotide-sugar biosynthesis; UDP-N-acetyl-alpha-D-glucosamine biosynthesis; N-acetyl-alpha-D-glucosamine 1-phosphate from alpha-D-glucosamine 6-phosphate (route II): step 2/2. It functions in the pathway nucleotide-sugar biosynthesis; UDP-N-acetyl-alpha-D-glucosamine biosynthesis; UDP-N-acetyl-alpha-D-glucosamine from N-acetyl-alpha-D-glucosamine 1-phosphate: step 1/1. The protein operates within bacterial outer membrane biogenesis; LPS lipid A biosynthesis. Catalyzes the last two sequential reactions in the de novo biosynthetic pathway for UDP-N-acetylglucosamine (UDP-GlcNAc). The C-terminal domain catalyzes the transfer of acetyl group from acetyl coenzyme A to glucosamine-1-phosphate (GlcN-1-P) to produce N-acetylglucosamine-1-phosphate (GlcNAc-1-P), which is converted into UDP-GlcNAc by the transfer of uridine 5-monophosphate (from uridine 5-triphosphate), a reaction catalyzed by the N-terminal domain. The polypeptide is Bifunctional protein GlmU (Prochlorococcus marinus (strain AS9601)).